The primary structure comprises 410 residues: Adenosine receptor A2a (410 aa).

The Extracellular segment spans residues 1-4 (MGSS). The chain crosses the membrane as a helical span at residues 5–29 (VYIMVELAIAVLAILGNVLVCWAVW). Over 30 to 39 (INSNLQNVTN) the chain is Cytoplasmic. The helical transmembrane segment at 40 to 63 (FFVVSLAAADIAVGVLAIPFAITI) threads the bilayer. Residues 64 to 74 (STGFCAACHGC) lie on the Extracellular side of the membrane. 3 disulfides stabilise this stretch: Cys68/Cys154, Cys71/Cys143, and Cys74/Cys161. A helical membrane pass occupies residues 75–97 (LFFACFVLVLTQSSIFSLLAIAI). The Cytoplasmic segment spans residues 98–117 (DRYIAIRIPLRYNGLVTGMR). A helical membrane pass occupies residues 118 to 140 (AKGIIAICWVLSFAIGLTPMLGW). Topologically, residues 141-168 (NNCSQKDENSTKTCGEGRVTCLFEDVVP) are extracellular. N-linked (GlcNAc...) asparagine glycosylation is found at Asn142 and Asn149. Adenosine is bound at residue Glu164. The chain crosses the membrane as a helical span at residues 169-193 (MNYMVYYNFFAFVLLPLLLMLAIYL). Residues 194–229 (RIFLAARRQLKQMESQPLPGERTRSTLQKEVHAAKS) are Cytoplasmic-facing. Residues 230–253 (LAIIVGLFALCWLPLHIINCFTFF) form a helical membrane-spanning segment. Asn248 contributes to the adenosine binding site. Cys254 and Cys257 form a disulfide bridge. Residues 254 to 261 (CSTCQHAP) lie on the Extracellular side of the membrane. The helical transmembrane segment at 262–285 (PWLMYLAIILSHSNSVVNPFIYAY) threads the bilayer. Residues Ser272 and His273 each contribute to the adenosine site. Residues 286–410 (RIREFRQTFR…ASWSSEFAPS (125 aa)) are Cytoplasmic-facing. The interval 322-410 (HSTEGEQVSL…ASWSSEFAPS (89 aa)) is interaction with GAS2L2. Positions 342–410 (ANGSAPHSGR…ASWSSEFAPS (69 aa)) are disordered. The segment covering 377 to 389 (TQEHQEGQEHPGL) has biased composition (basic and acidic residues). Residues 401-410 (ASWSSEFAPS) are compositionally biased toward polar residues.

This sequence belongs to the G-protein coupled receptor 1 family. As to quaternary structure, interacts (via cytoplasmic C-terminal domain) with USP4; the interaction is direct. May interact with DRD4. Interacts with NECAB2. Interacts (via cytoplasmic C-terminal domain) with GAS2L2; interaction enhances receptor-mediated adenylyl cyclase activity. In terms of processing, ubiquitinated. Deubiquitinated by USP4; leading to stabilization and expression at the cell surface.

The protein resides in the cell membrane. Receptor for adenosine. The activity of this receptor is mediated by G proteins which activate adenylyl cyclase. The chain is Adenosine receptor A2a (Adora2a) from Mus musculus (Mouse).